Consider the following 603-residue polypeptide: Polypeptide N-acetylgalactosaminyltransferase 10 (603 aa).

Over 1 to 11 the chain is Cytoplasmic; the sequence is MRRKEKRLLQA. The helical; Signal-anchor for type II membrane protein transmembrane segment at 12-31 threads the bilayer; sequence VALALAALVLLPNVGLWALY. Residues 32 to 603 are Lumenal-facing; that stretch reads RERQPDGSPG…STVLENFNKN (572 aa). N-linked (GlcNAc...) asparagine glycans are attached at residues asparagine 124 and asparagine 146. Disulfide bonds link cysteine 135-cysteine 365, cysteine 356-cysteine 432, cysteine 471-cysteine 488, cysteine 523-cysteine 538, and cysteine 563-cysteine 578. Positions 144–253 are catalytic subdomain A; that stretch reads LPNTSIIIPF…VNWLPPLLDR (110 aa). Substrate is bound by residues aspartate 185 and arginine 214. Aspartate 237 provides a ligand contact to Mn(2+). Residue serine 238 participates in substrate binding. Histidine 239 provides a ligand contact to Mn(2+). The segment at 311-373 is catalytic subdomain B; the sequence is PFESPVMAGG…PCSRVGHIYR (63 aa). Residue tryptophan 342 participates in substrate binding. Residue histidine 370 participates in Mn(2+) binding. Substrate contacts are provided by arginine 373 and tyrosine 378. Residues 373–384 form a flexible loop region; that stretch reads RKYVPYKVPAGV. One can recognise a Ricin B-type lectin domain in the interval 458–590; sequence AAWGEIRNVG…SSLTQQWLFE (133 aa). Asparagine 593 carries N-linked (GlcNAc...) asparagine glycosylation.

The protein belongs to the glycosyltransferase 2 family. GalNAc-T subfamily. Requires Mn(2+) as cofactor. As to expression, expressed at higher level than GALNT9. In the developing hindbrain region of 14.5 dpc embryos it accumulates in the rapidly dividing, undifferentiated ventricular zone adjacent to the pons. It also accumulates in the regions immediately rostral and caudal to the dorsal rhombic lips differentiating into the cerebellum. Not expressed in the developing choroid plexus.

Its subcellular location is the golgi apparatus membrane. The enzyme catalyses L-seryl-[protein] + UDP-N-acetyl-alpha-D-galactosamine = a 3-O-[N-acetyl-alpha-D-galactosaminyl]-L-seryl-[protein] + UDP + H(+). It catalyses the reaction L-threonyl-[protein] + UDP-N-acetyl-alpha-D-galactosamine = a 3-O-[N-acetyl-alpha-D-galactosaminyl]-L-threonyl-[protein] + UDP + H(+). It functions in the pathway protein modification; protein glycosylation. Its function is as follows. Catalyzes the initial reaction in O-linked oligosaccharide biosynthesis, the transfer of an N-acetyl-D-galactosamine residue to a serine or threonine residue on the protein receptor. Has activity toward Muc5Ac and EA2 peptide substrates. The polypeptide is Polypeptide N-acetylgalactosaminyltransferase 10 (Galnt10) (Mus musculus (Mouse)).